The primary structure comprises 335 residues: AA9 family lytic polysaccharide monooxygenase A (335 aa).

The first 21 residues, 1 to 21, serve as a signal peptide directing secretion; that stretch reads MSSFITKTVLAALVAAAGVRA. Cu(2+) contacts are provided by His-22 and His-107. A disulfide bond links Cys-77 and Cys-196. Residues His-182 and Gln-191 each contribute to the O2 site. Tyr-193 serves as a coordination point for Cu(2+). A disordered region spans residues 241 to 335; sequence PKMNIAGGSS…ARRHARDMMN (95 aa). A compositionally biased stretch (low complexity) spans 251-303; the sequence is GAAPSTPATPTTGSGSDTPSNTAAPVESAPAESAAPVESAPAAGNGNQNNGGA. Positions 321-335 are enriched in basic residues; it reads CKAKKARRHARDMMN.

This sequence belongs to the polysaccharide monooxygenase AA9 family. Requires Cu(2+) as cofactor.

It is found in the secreted. The enzyme catalyses [(1-&gt;4)-beta-D-glucosyl]n+m + reduced acceptor + O2 = 4-dehydro-beta-D-glucosyl-[(1-&gt;4)-beta-D-glucosyl]n-1 + [(1-&gt;4)-beta-D-glucosyl]m + acceptor + H2O.. In terms of biological role, lytic polysaccharide monooxygenase (LPMO) that depolymerizes crystalline and amorphous polysaccharides via the oxidation of scissile alpha- or beta-(1-4)-glycosidic bonds, yielding C1 or C4 oxidation products. Catalysis by LPMOs requires the reduction of the active-site copper from Cu(II) to Cu(I) by a reducing agent and H(2)O(2) or O(2) as a cosubstrate. Is capable of cleaving cellulose, but not chitin. Is also active on tamarind xyloglucan and longer xyloglucan oligosaccharides. Has no activity toward shorter cellooligosaccharides (Glc3-6), as well as toward the xyloglucan-heptamer, birchwood xylan, wheat arabinoxylan, konjac glucomannan, ivory nut mannan, beta-glucan from barley, lichenan from Icelandic moss, starch, and spruce galactoglucomannan. Has unprecedented broad specificity on xyloglucan, cleaving any glycosidicbond in theb-glucan main chain, regardless of xylosyl substitutions. When incubated with a mixture of xyloglucan and cellulose, efficiently attacks the xyloglucan, whereas cellulose conversion is inhibited, suggesting that removal of hemicellulose may be the true function of this LPMO during biomass conversion. The chain is AA9 family lytic polysaccharide monooxygenase A from Gibberella zeae (strain ATCC MYA-4620 / CBS 123657 / FGSC 9075 / NRRL 31084 / PH-1) (Wheat head blight fungus).